The chain runs to 506 residues: Hippocampus abundant transcript-like protein 1 (506 aa).

The interval 1–25 (MSVEPPPELEEKAASEPEAGAMPEK) is disordered. Over 1–49 (MSVEPPPELEEKAASEPEAGAMPEKRAGAQAAGSTWLQGFGRPSVYHAA) the chain is Extracellular. The chain crosses the membrane as a helical span at residues 50–70 (IVIFLEFFAWGLLTTPMLTVL). The Cytoplasmic portion of the chain corresponds to 71–82 (HETFSQHTFLMN). A helical membrane pass occupies residues 83 to 103 (GLIQGVKGLLSFLSAPLIGAL). At 104–111 (SDVWGRKP) the chain is on the extracellular side. Residues 112 to 132 (FLLGTVFFTCFPIPLMRISPW) form a helical membrane-spanning segment. Residues 133 to 134 (WY) lie on the Cytoplasmic side of the membrane. Residues 135–155 (FAMISVSGVFSVTFSVIFAYV) traverse the membrane as a helical segment. Topologically, residues 156–168 (ADVTQEHERSTAY) are extracellular. The helical transmembrane segment at 169–189 (GWVSATFAASLVSSPAIGAYL) threads the bilayer. The Cytoplasmic segment spans residues 190–196 (SASYGDS). The helical transmembrane segment at 197–217 (LVVLVATVVALLDICFILVAV) threads the bilayer. Residues 218-255 (PESLPEKMRPVSWGAQISWKQADPFASLKKVGKDSTVL) are Extracellular-facing. Residues 256-276 (LICITVFLSYLPEAGQYSSFF) traverse the membrane as a helical segment. The Cytoplasmic segment spans residues 277–281 (LYLRQ). A helical membrane pass occupies residues 282 to 302 (VIGFGSVKIAAFIAMVGILSI). The Extracellular portion of the chain corresponds to 303–319 (VAQTAFLSILMRSLGNK). A helical transmembrane segment spans residues 320-340 (NTVLLGLGFQMLQLAWYGFGS). Q341 is a topological domain (cytoplasmic). The chain crosses the membrane as a helical span at residues 342–362 (AWMMWAAGTVAAMSSITFPAI). Residues 363–387 (SALVSRNAESDQQGVAQGIITGIRG) lie on the Extracellular side of the membrane. The chain crosses the membrane as a helical span at residues 388 to 408 (LCNGLGPALYGFIFYMFHVEL). Residues 409 to 428 (TELGPKLNSNNVPLQGAVIP) lie on the Cytoplasmic side of the membrane. The helical transmembrane segment at 429 to 449 (GPPFLFGACIVLMSFLVALFI) threads the bilayer. The Extracellular segment spans residues 450 to 506 (PEYSKASGVQKHSNSSSGSLTNTPERGSDEDIEPLLQDSSIWELSSFEEPGNQCTEL). A disordered region spans residues 457–481 (GVQKHSNSSSGSLTNTPERGSDEDI). Residues 459-474 (QKHSNSSSGSLTNTPE) show a composition bias toward polar residues. N-linked (GlcNAc...) asparagine glycosylation occurs at N463.

Belongs to the major facilitator superfamily.

It localises to the membrane. The protein is Hippocampus abundant transcript-like protein 1 of Homo sapiens (Human).